A 333-amino-acid polypeptide reads, in one-letter code: Nucleoid-associated protein PSPTO_1265 (333 aa).

This sequence belongs to the YejK family.

It localises to the cytoplasm. It is found in the nucleoid. This chain is Nucleoid-associated protein PSPTO_1265, found in Pseudomonas syringae pv. tomato (strain ATCC BAA-871 / DC3000).